A 261-amino-acid chain; its full sequence is Glucosamine-6-phosphate deaminase (261 aa).

The Proton acceptor; for enolization step role is filled by Asp67. The For ring-opening step role is filled by Asp136. His138 serves as the catalytic Proton acceptor; for ring-opening step. The active-site For ring-opening step is the Glu143.

This sequence belongs to the glucosamine/galactosamine-6-phosphate isomerase family. NagB subfamily.

The catalysed reaction is alpha-D-glucosamine 6-phosphate + H2O = beta-D-fructose 6-phosphate + NH4(+). It participates in amino-sugar metabolism; N-acetylneuraminate degradation; D-fructose 6-phosphate from N-acetylneuraminate: step 5/5. Catalyzes the reversible isomerization-deamination of glucosamine 6-phosphate (GlcN6P) to form fructose 6-phosphate (Fru6P) and ammonium ion. The polypeptide is Glucosamine-6-phosphate deaminase (Mycolicibacterium smegmatis (strain ATCC 700084 / mc(2)155) (Mycobacterium smegmatis)).